Reading from the N-terminus, the 224-residue chain is Probable Brix domain-containing ribosomal biogenesis protein (224 aa).

A Brix domain is found at 1 to 196 (MMLITTSHRP…IWIMEDGRRW (196 aa)).

In terms of biological role, probably involved in the biogenesis of the ribosome. The protein is Probable Brix domain-containing ribosomal biogenesis protein of Pyrococcus abyssi (strain GE5 / Orsay).